Here is a 467-residue protein sequence, read N- to C-terminus: Probable protein phosphatase 2C 6 (467 aa).

The segment at 61-81 (VEDDAVAPGRGEEGGEASAVG) is disordered. The PPM-type phosphatase domain maps to 149-457 (LWGHKSICGR…DNISVIVVDL (309 aa)). Mn(2+) contacts are provided by Asp-205, Gly-206, Asp-386, and Asp-448.

The protein belongs to the PP2C family. As to quaternary structure, interacts with PYL9. Requires Mg(2+) as cofactor. The cofactor is Mn(2+).

The protein resides in the nucleus. It is found in the cytoplasm. It localises to the cytosol. The enzyme catalyses O-phospho-L-seryl-[protein] + H2O = L-seryl-[protein] + phosphate. It catalyses the reaction O-phospho-L-threonyl-[protein] + H2O = L-threonyl-[protein] + phosphate. In terms of biological role, probable protein phosphatase that may function in abscisic acid (ABA) signaling. This is Probable protein phosphatase 2C 6 from Oryza sativa subsp. japonica (Rice).